The sequence spans 352 residues: Cobalt transport protein NhlF (352 aa).

The next 8 helical transmembrane spans lie at 23-43, 46-66, 95-115, 131-151, 206-226, 230-250, 290-310, and 323-343; these read LASVVGAIVILHVLGVALYLG, GNPAAAGGLAGSGVLAYVLGV, VGFFFAMGHSTVVVVLALVVA, EIGGLVATVVAVTFLSIVAGL, PVGLLMGLGLETASEVTLLTL, AATGGTLSIAAVLSLPLLFAA, VIGLFVAGIYVCALLAHLPMF, and FEFLGYAVAAAFILTWTGALL.

This sequence belongs to the NiCoT transporter (TC 2.A.52) family.

The protein localises to the cell membrane. With respect to regulation, cobalt uptake is inhibited by uncouplers (CCCP and 3,5-di-tert-butyl-4-hydroxybenzylidenemalononitrile) and by the addition of excess nickel. Its function is as follows. Mediates energy-dependent uptake of cobalt ions into the cell. Can also transport nickel ions, but cobalt is the preferred substrate. This is Cobalt transport protein NhlF (nhlF) from Rhodococcus rhodochrous.